Consider the following 269-residue polypeptide: Tryptophan synthase alpha chain (269 aa).

Catalysis depends on proton acceptor residues Glu50 and Asp61.

The protein belongs to the TrpA family. Tetramer of two alpha and two beta chains.

The catalysed reaction is (1S,2R)-1-C-(indol-3-yl)glycerol 3-phosphate + L-serine = D-glyceraldehyde 3-phosphate + L-tryptophan + H2O. Its pathway is amino-acid biosynthesis; L-tryptophan biosynthesis; L-tryptophan from chorismate: step 5/5. In terms of biological role, the alpha subunit is responsible for the aldol cleavage of indoleglycerol phosphate to indole and glyceraldehyde 3-phosphate. The protein is Tryptophan synthase alpha chain of Francisella tularensis subsp. holarctica (strain FTNF002-00 / FTA).